Consider the following 275-residue polypeptide: NADPH-dependent 7-cyano-7-deazaguanine reductase (275 aa).

Ile81–Ser83 contacts substrate. Position 83–84 (Ser83–Lys84) interacts with NADPH. The Thioimide intermediate role is filled by Cys181. Residue Asp188 is the Proton donor of the active site. His220–Glu221 contributes to the substrate binding site. Position 249–250 (Arg249–Gly250) interacts with NADPH.

The protein belongs to the GTP cyclohydrolase I family. QueF type 2 subfamily. In terms of assembly, homodimer.

The protein localises to the cytoplasm. The enzyme catalyses 7-aminomethyl-7-carbaguanine + 2 NADP(+) = 7-cyano-7-deazaguanine + 2 NADPH + 3 H(+). It functions in the pathway tRNA modification; tRNA-queuosine biosynthesis. Functionally, catalyzes the NADPH-dependent reduction of 7-cyano-7-deazaguanine (preQ0) to 7-aminomethyl-7-deazaguanine (preQ1). The chain is NADPH-dependent 7-cyano-7-deazaguanine reductase from Xylella fastidiosa (strain 9a5c).